A 189-amino-acid polypeptide reads, in one-letter code: Protein GrpE (189 aa).

Polar residues predominate over residues 1–20 (MSDQQHSAPQNAAATASPSD). The interval 1–29 (MSDQQHSAPQNAAATASPSDSPEAVEATM) is disordered.

This sequence belongs to the GrpE family. As to quaternary structure, homodimer.

It is found in the cytoplasm. Participates actively in the response to hyperosmotic and heat shock by preventing the aggregation of stress-denatured proteins, in association with DnaK and GrpE. It is the nucleotide exchange factor for DnaK and may function as a thermosensor. Unfolded proteins bind initially to DnaJ; upon interaction with the DnaJ-bound protein, DnaK hydrolyzes its bound ATP, resulting in the formation of a stable complex. GrpE releases ADP from DnaK; ATP binding to DnaK triggers the release of the substrate protein, thus completing the reaction cycle. Several rounds of ATP-dependent interactions between DnaJ, DnaK and GrpE are required for fully efficient folding. This Paracidovorax citrulli (strain AAC00-1) (Acidovorax citrulli) protein is Protein GrpE.